Consider the following 153-residue polypeptide: Putative OPA3-like protein CG43998 (153 aa).

Residues 101–153 adopt a coiled-coil conformation; sequence ELSKTYTKTKKQNQEIEDQKRVLDECVDCISADVERNQREINWIKAALKNVEK.

This sequence belongs to the OPA3 family.

The polypeptide is Putative OPA3-like protein CG43998 (Drosophila melanogaster (Fruit fly)).